Reading from the N-terminus, the 104-residue chain is Probable quinol monooxygenase YgiN (104 aa).

The region spanning 2–100 (LTVIAEIRTR…DVLEMNIRIL (99 aa)) is the ABM domain.

In terms of assembly, homodimer.

The enzyme catalyses menadiol + 2 O2 = menadione + 2 superoxide + 2 H(+). Can oxidize menadiol to menadione. This is Probable quinol monooxygenase YgiN (ygiN) from Escherichia coli O157:H7.